A 535-amino-acid chain; its full sequence is High affinity immunoglobulin alpha and immunoglobulin mu Fc receptor (535 aa).

An N-terminal signal peptide occupies residues 1-35 (MDQGAPAKPSEQKVPSLRTRWEILLLTLCLLHGSS). At 36–455 (MTPPHRRSHS…ALMEGESHTR (420 aa)) the chain is on the extracellular side. Residues 95–117 (GGAVTIHCHYAPSSVNRHQRKYW) form a mediates immunoglobulin Fc fragment-binding region. Positions 95–189 (GGAVTIHCHY…DMLFFSVNLT (95 aa)) constitute an Ig-like V-type domain. The cysteines at positions 102 and 173 are disulfide-linked. A glycan (N-linked (GlcNAc...) asparagine) is linked at asparagine 187. Disordered stretches follow at residues 201 to 360 (AAPA…LISE) and 405 to 430 (EGRSIDGSLENTTEESSPPTPSQLSV). 2 stretches are compositionally biased toward low complexity: residues 208–220 (PTTASPGAASSAG) and 241–253 (TVPTTGTSKTTSS). Over residues 291-328 (KSRSMSSTTQGVWLWSTRNSVTPSVTTSEGRRQGTTPE) the composition is skewed to polar residues. The span at 330 to 346 (DGPRDETDVRVSPEAPR) shows a compositional bias: basic and acidic residues. Over residues 413 to 429 (LENTTEESSPPTPSQLS) the composition is skewed to polar residues. A helical transmembrane segment spans residues 456 to 476 (ILTPVSTVLALLLIAALILLK). At 477 to 535 (RSLGRQRTSQKKERVPRITLIQMTHFLPDKLPDEGKNFQQSNLLPPQASLTVLENDPRP) the chain is on the cytoplasmic side. The interval 507–535 (LPDEGKNFQQSNLLPPQASLTVLENDPRP) is disordered. Residues 513–528 (NFQQSNLLPPQASLTV) show a composition bias toward polar residues.

As to quaternary structure, interacts with IGHM; this interaction facilitates the endocytosis of IgM-coated microbes and IgM-antigen immune complexes. Post-translationally, N-glycosylated. As to expression, expressed in several tissues including thymus, spleen, liver, kidney, small and large intestine, testis and placenta. Expressed by oligodendrocytes, B-cells and macrophages but not granulocytes, T-cells or NK cells (at protein level).

The protein resides in the cell membrane. In terms of biological role, functions as a receptor for the Fc fragment of IgA and IgM. Binds IgA and IgM with high affinity and mediates their endocytosis. May function in the immune response to microbes mediated by IgA and IgM. The sequence is that of High affinity immunoglobulin alpha and immunoglobulin mu Fc receptor (Fcamr) from Mus musculus (Mouse).